Consider the following 47-residue polypeptide: Photosystem II reaction center protein K (47 aa).

Positions 1–10 (MNIGFDMILA) are excised as a propeptide. The helical transmembrane segment at 22–42 (LVDVLPVIPLLFLLLAFVWQA) threads the bilayer.

This sequence belongs to the PsbK family. In terms of assembly, PSII is composed of 1 copy each of membrane proteins PsbA, PsbB, PsbC, PsbD, PsbE, PsbF, PsbH, PsbI, PsbJ, PsbK, PsbL, PsbM, PsbT, PsbX, PsbY, PsbZ, Psb30/Ycf12, at least 3 peripheral proteins of the oxygen-evolving complex and a large number of cofactors. It forms dimeric complexes.

The protein resides in the plastid. It is found in the chloroplast thylakoid membrane. Its function is as follows. One of the components of the core complex of photosystem II (PSII). PSII is a light-driven water:plastoquinone oxidoreductase that uses light energy to abstract electrons from H(2)O, generating O(2) and a proton gradient subsequently used for ATP formation. It consists of a core antenna complex that captures photons, and an electron transfer chain that converts photonic excitation into a charge separation. This is Photosystem II reaction center protein K from Mesostigma viride (Green alga).